A 267-amino-acid polypeptide reads, in one-letter code: Tryptophan synthase alpha chain (267 aa).

Active-site proton acceptor residues include Glu43 and Asp54.

It belongs to the TrpA family. In terms of assembly, tetramer of two alpha and two beta chains.

The enzyme catalyses (1S,2R)-1-C-(indol-3-yl)glycerol 3-phosphate + L-serine = D-glyceraldehyde 3-phosphate + L-tryptophan + H2O. It participates in amino-acid biosynthesis; L-tryptophan biosynthesis; L-tryptophan from chorismate: step 5/5. The alpha subunit is responsible for the aldol cleavage of indoleglycerol phosphate to indole and glyceraldehyde 3-phosphate. This is Tryptophan synthase alpha chain from Bacillus licheniformis (strain ATCC 14580 / DSM 13 / JCM 2505 / CCUG 7422 / NBRC 12200 / NCIMB 9375 / NCTC 10341 / NRRL NRS-1264 / Gibson 46).